Consider the following 156-residue polypeptide: Cytochrome c-type biogenesis protein CcmE (156 aa).

Residues 1 to 16 (MNATKAPGGIKPKHQR) lie on the Cytoplasmic side of the membrane. The chain crosses the membrane as a helical; Signal-anchor for type II membrane protein span at residues 17–37 (LVLLVIALVALIGAGLLAAYA). At 38-156 (LSNQASYFYV…QAEAVVAETK (119 aa)) the chain is on the periplasmic side. Positions 131 and 135 each coordinate heme.

This sequence belongs to the CcmE/CycJ family.

Its subcellular location is the cell inner membrane. In terms of biological role, heme chaperone required for the biogenesis of c-type cytochromes. Transiently binds heme delivered by CcmC and transfers the heme to apo-cytochromes in a process facilitated by CcmF and CcmH. In Novosphingobium aromaticivorans (strain ATCC 700278 / DSM 12444 / CCUG 56034 / CIP 105152 / NBRC 16084 / F199), this protein is Cytochrome c-type biogenesis protein CcmE.